The primary structure comprises 907 residues: Coatomer subunit beta'-1 (907 aa).

WD repeat units follow at residues 13-52, 55-94, 97-136, 140-180, 183-224, 227-266, 269-309, 351-389, and 461-501; these read QRSERVKSVDLHPTEPWILSSLYSGSVCIWDYQSQTMVKS, VSELPVRSAKFISRKQWVVAGADDMFIRVYNYNTMDKVKV, AHTDYIRCVAVHPTLPYVLSSSDDMLIKLWDWDKGWMCTQ, GHSH…PNFT, GHQK…CVQT, GHTHNISAVCFHPELPIIITGSEDGTVRIWHSTTYRLENT, YGLE…ASMD, SCDLYPQSLKHNPNGRFVVVCGDGEFIIYTALAWRNRSF, and RIDV…SYLE. Acidic residues-rich tracts occupy residues 850–866 and 874–887; these read ETEDALDENGEPDEEVL and STDEAVEVDADEPE. The disordered stretch occupies residues 850-887; the sequence is ETEDALDENGEPDEEVLEENKVEESTDEAVEVDADEPE.

The protein belongs to the WD repeat COPB2 family. Oligomeric complex that consists of at least the alpha, beta, beta', gamma, delta, epsilon and zeta subunits.

Its subcellular location is the cytoplasm. The protein resides in the golgi apparatus membrane. It localises to the cytoplasmic vesicle. It is found in the COPI-coated vesicle membrane. In terms of biological role, the coatomer is a cytosolic protein complex that binds to dilysine motifs and reversibly associates with Golgi non-clathrin-coated vesicles, which further mediate biosynthetic protein transport from the ER, via the Golgi up to the trans Golgi network. Coatomer complex is required for budding from Golgi membranes, and is essential for the retrograde Golgi-to-ER transport of dilysine-tagged proteins. This Oryza sativa subsp. japonica (Rice) protein is Coatomer subunit beta'-1.